A 268-amino-acid polypeptide reads, in one-letter code: MADRFTKMHGLGNDFVVIDARVAPVEMTPARAHAIADRRHGIGCDQLILLEPSTSADVKMRIFNADGGEVEACGNATRCVATLIGKPAVIETLAGMLRVTPADGGAEVTLGEPVFDWDHIPLAMPMDTRDMPVAWDELEHGAAVNVGNPHIVFFVPEADAVALDQLGPRIETDPLFPERVNVNVASLDGENQLQLRVWERGVGLTQACGTGACATAVAAIRAGLVRSPVTVALPGGDLVIRWAPGEPIVMSGAATRVFDGETDWAQFG.

Positions 13, 46, and 64 each coordinate substrate. C73 (proton donor) is an active-site residue. Substrate is bound by residues 74–75 (GN), N148, N181, and 199–200 (ER). Catalysis depends on C208, which acts as the Proton acceptor. 209-210 (GT) provides a ligand contact to substrate.

This sequence belongs to the diaminopimelate epimerase family. In terms of assembly, homodimer.

The protein resides in the cytoplasm. It carries out the reaction (2S,6S)-2,6-diaminopimelate = meso-2,6-diaminopimelate. Its pathway is amino-acid biosynthesis; L-lysine biosynthesis via DAP pathway; DL-2,6-diaminopimelate from LL-2,6-diaminopimelate: step 1/1. In terms of biological role, catalyzes the stereoinversion of LL-2,6-diaminopimelate (L,L-DAP) to meso-diaminopimelate (meso-DAP), a precursor of L-lysine and an essential component of the bacterial peptidoglycan. This Sphingopyxis alaskensis (strain DSM 13593 / LMG 18877 / RB2256) (Sphingomonas alaskensis) protein is Diaminopimelate epimerase.